The sequence spans 483 residues: UDP-N-acetylmuramoyl-L-alanyl-D-glutamate--2,6-diaminopimelate ligase (483 aa).

S30 is a binding site for UDP-N-acetyl-alpha-D-muramoyl-L-alanyl-D-glutamate. 109–115 lines the ATP pocket; that stretch reads GTNGKTT. Residues 151-152, S178, and R186 each bind UDP-N-acetyl-alpha-D-muramoyl-L-alanyl-D-glutamate; that span reads TT. An N6-carboxylysine modification is found at K218. Residues R380, 403 to 406, G453, and E457 contribute to the meso-2,6-diaminopimelate site; that span reads DNPR. A Meso-diaminopimelate recognition motif motif is present at residues 403–406; sequence DNPR.

Belongs to the MurCDEF family. MurE subfamily. Requires Mg(2+) as cofactor. In terms of processing, carboxylation is probably crucial for Mg(2+) binding and, consequently, for the gamma-phosphate positioning of ATP.

It localises to the cytoplasm. The enzyme catalyses UDP-N-acetyl-alpha-D-muramoyl-L-alanyl-D-glutamate + meso-2,6-diaminopimelate + ATP = UDP-N-acetyl-alpha-D-muramoyl-L-alanyl-gamma-D-glutamyl-meso-2,6-diaminopimelate + ADP + phosphate + H(+). It participates in cell wall biogenesis; peptidoglycan biosynthesis. Its function is as follows. Catalyzes the addition of meso-diaminopimelic acid to the nucleotide precursor UDP-N-acetylmuramoyl-L-alanyl-D-glutamate (UMAG) in the biosynthesis of bacterial cell-wall peptidoglycan. The sequence is that of UDP-N-acetylmuramoyl-L-alanyl-D-glutamate--2,6-diaminopimelate ligase from Chlamydia caviae (strain ATCC VR-813 / DSM 19441 / 03DC25 / GPIC) (Chlamydophila caviae).